Consider the following 439-residue polypeptide: GTPase Der (439 aa).

2 EngA-type G domains span residues 2–168 (ATVL…EEKG) and 181–357 (IKVA…ASYT). Residues 8–15 (GKPNVGKS), 55–59 (DTCGV), 118–121 (NKAE), 187–194 (GRPNVGKS), 234–238 (DTAGL), and 300–303 (NKWD) contribute to the GTP site. Residues 358-439 (TKVPSSAINS…PIFLKFKRSR (82 aa)) form the KH-like domain.

Belongs to the TRAFAC class TrmE-Era-EngA-EngB-Septin-like GTPase superfamily. EngA (Der) GTPase family. As to quaternary structure, associates with the 50S ribosomal subunit.

Functionally, GTPase that plays an essential role in the late steps of ribosome biogenesis. The protein is GTPase Der of Thermotoga sp. (strain RQ2).